The following is a 148-amino-acid chain: Large ribosomal subunit protein bL9 (148 aa).

It belongs to the bacterial ribosomal protein bL9 family.

Its function is as follows. Binds to the 23S rRNA. The chain is Large ribosomal subunit protein bL9 from Prosthecochloris aestuarii (strain DSM 271 / SK 413).